A 384-amino-acid chain; its full sequence is Galactokinase (384 aa).

Substrate is bound at residue 34–37 (EHTD). Residue 123 to 129 (SSGLSSS) participates in ATP binding. Residues Ser129 and Glu161 each coordinate Mg(2+). Catalysis depends on Asp173, which acts as the Proton acceptor. Residue Tyr222 coordinates substrate.

Belongs to the GHMP kinase family. GalK subfamily.

It localises to the cytoplasm. It catalyses the reaction alpha-D-galactose + ATP = alpha-D-galactose 1-phosphate + ADP + H(+). It participates in carbohydrate metabolism; galactose metabolism. In terms of biological role, catalyzes the transfer of the gamma-phosphate of ATP to D-galactose to form alpha-D-galactose-1-phosphate (Gal-1-P). This is Galactokinase from Actinobacillus pleuropneumoniae serotype 5b (strain L20).